The primary structure comprises 422 residues: Tryptophan synthase beta chain (422 aa).

Residue lysine 111 is modified to N6-(pyridoxal phosphate)lysine.

It belongs to the TrpB family. In terms of assembly, tetramer of two alpha and two beta chains. The cofactor is pyridoxal 5'-phosphate.

The catalysed reaction is (1S,2R)-1-C-(indol-3-yl)glycerol 3-phosphate + L-serine = D-glyceraldehyde 3-phosphate + L-tryptophan + H2O. Its pathway is amino-acid biosynthesis; L-tryptophan biosynthesis; L-tryptophan from chorismate: step 5/5. Functionally, the beta subunit is responsible for the synthesis of L-tryptophan from indole and L-serine. This chain is Tryptophan synthase beta chain, found in Pseudothermotoga lettingae (strain ATCC BAA-301 / DSM 14385 / NBRC 107922 / TMO) (Thermotoga lettingae).